Consider the following 165-residue polypeptide: Large ribosomal subunit protein uL15 (165 aa).

Basic residues predominate over residues 1–29 (MTSKKKRQRGSRTHGGGSHKNRRGAGHRG). 2 disordered regions span residues 1–59 (MTSK…QKVQ) and 133–165 (KVEGAGGSVELTDLGEERQAEAEETEDADADEE). Residues 30–47 (GRGDAGRDKHEFHNHEPL) show a composition bias toward basic and acidic residues. Residues 154–165 (AEETEDADADEE) are compositionally biased toward acidic residues.

This sequence belongs to the universal ribosomal protein uL15 family. Part of the 50S ribosomal subunit. Interacts weakly with proteins L18e and L32e.

Functionally, binds to the 23S rRNA. The protein is Large ribosomal subunit protein uL15 (rpl15) of Haloarcula marismortui (strain ATCC 43049 / DSM 3752 / JCM 8966 / VKM B-1809) (Halobacterium marismortui).